We begin with the raw amino-acid sequence, 88 residues long: ATP synthase F(0) complex subunit f, mitochondrial (88 aa).

Ala-2 is subject to N-acetylalanine. Ser-3 is subject to Phosphoserine. Lys-16 is modified (N6-acetyllysine). Residues 62–79 (MVLAAYVVFNYCRSYKEL) traverse the membrane as a helical segment.

Belongs to the ATPase F chain family. Component of the ATP synthase complex composed at least of ATP5F1A/subunit alpha, ATP5F1B/subunit beta, ATP5MC1/subunit c (homooctomer), MT-ATP6/subunit a, MT-ATP8/subunit 8, ATP5ME/subunit e, ATP5MF/subunit f, ATP5MG/subunit g, ATP5MK/subunit k, ATP5MJ/subunit j, ATP5F1C/subunit gamma, ATP5F1D/subunit delta, ATP5F1E/subunit epsilon, ATP5PF/subunit F6, ATP5PB/subunit b, ATP5PD/subunit d, ATP5PO/subunit OSCP. ATP synthase complex consists of a soluble F(1) head domain (subunits alpha(3) and beta(3)) - the catalytic core - and a membrane F(0) domain - the membrane proton channel (subunits c, a, 8, e, f, g, k and j). These two domains are linked by a central stalk (subunits gamma, delta, and epsilon) rotating inside the F1 region and a stationary peripheral stalk (subunits F6, b, d, and OSCP).

It localises to the mitochondrion. The protein localises to the mitochondrion inner membrane. Functionally, subunit f, of the mitochondrial membrane ATP synthase complex (F(1)F(0) ATP synthase or Complex V) that produces ATP from ADP in the presence of a proton gradient across the membrane which is generated by electron transport complexes of the respiratory chain. ATP synthase complex consist of a soluble F(1) head domain - the catalytic core - and a membrane F(1) domain - the membrane proton channel. These two domains are linked by a central stalk rotating inside the F(1) region and a stationary peripheral stalk. During catalysis, ATP synthesis in the catalytic domain of F(1) is coupled via a rotary mechanism of the central stalk subunits to proton translocation. In vivo, can only synthesize ATP although its ATP hydrolase activity can be activated artificially in vitro. Part of the complex F(0) domain. This chain is ATP synthase F(0) complex subunit f, mitochondrial, found in Sus scrofa (Pig).